The following is a 434-amino-acid chain: Quinolone resistance transporter (434 aa).

The next 12 membrane-spanning stretches (helical) occupy residues 15 to 35 (LIPALVILYLVAYIDRAAVGF), 45 to 65 (GIGDAAYGLGAGLFFIGYFLF), 85 to 105 (ILLTWGLITMAMALIQGPKSF), 110 to 130 (FLLGVAEAGFFPGVLYLITQW), 142 to 162 (MFVLSQPIAMMIAGPLAGLLL), 175 to 195 (WLFVAVGLPAVLLALPTFLWL), 241 to 261 (VLLLALYYLPVTLSIYGLNLW), 275 to 295 (IQIGFLSSIPYIFGIIGLLII), 306 to 326 (YGHLSFLYALGACAMFLSGWL), 333 to 353 (LAALAVVAFCLFSSTAVFWTL), 367 to 387 (IALINSVGNLGGYVGPFGIGL), and 396 to 416 (AAGLYFLSIVMLFGLILTYIV).

It belongs to the major facilitator superfamily.

It localises to the cell inner membrane. Functionally, efflux pump that mediates resistance to quinolone-type antibiotics. The protein is Quinolone resistance transporter of Acinetobacter baumannii.